The sequence spans 449 residues: UDP-N-acetylmuramate--L-alanine ligase (449 aa).

118 to 124 lines the ATP pocket; sequence GTHGKTT.

Belongs to the MurCDEF family.

It localises to the cytoplasm. The enzyme catalyses UDP-N-acetyl-alpha-D-muramate + L-alanine + ATP = UDP-N-acetyl-alpha-D-muramoyl-L-alanine + ADP + phosphate + H(+). It functions in the pathway cell wall biogenesis; peptidoglycan biosynthesis. Functionally, cell wall formation. The sequence is that of UDP-N-acetylmuramate--L-alanine ligase from Flavobacterium johnsoniae (strain ATCC 17061 / DSM 2064 / JCM 8514 / BCRC 14874 / CCUG 350202 / NBRC 14942 / NCIMB 11054 / UW101) (Cytophaga johnsonae).